The sequence spans 216 residues: Squamosa promoter-binding-like protein 13 (216 aa).

The segment at 32–110 is disordered; that stretch reads GDGGAALPSP…PSGGGGGPRC (79 aa). The segment covering 67–91 has biased composition (low complexity); that stretch reads SSSAAVAAGASSSSSSSSVAAAARR. The span at 94–108 shows a compositional bias: gly residues; sequence GRAGGGAPSGGGGGP. The segment at 107 to 184 adopts an SBP-type zinc-finger fold; that stretch reads GPRCQVERCG…AGHNERRRKS (78 aa). Zn(2+)-binding residues include cysteine 110, cysteine 115, cysteine 132, histidine 135, cysteine 151, cysteine 154, histidine 158, and cysteine 170. A Bipartite nuclear localization signal motif is present at residues 167 to 183; sequence KRSCRRRLAGHNERRRK. Positions 175-216 are disordered; the sequence is AGHNERRRKSAADTAHGENCRHADQDAGRSHQGTGNPPFQIR. Basic and acidic residues predominate over residues 189–203; the sequence is AHGENCRHADQDAGR. Positions 205-216 are enriched in polar residues; that stretch reads HQGTGNPPFQIR.

As to expression, ubiquitous.

The protein resides in the nucleus. Trans-acting factor that binds specifically to the consensus nucleotide sequence 5'-TNCGTACAA-3'. May be involved in panicle development. The polypeptide is Squamosa promoter-binding-like protein 13 (SPL13) (Oryza sativa subsp. japonica (Rice)).